Reading from the N-terminus, the 355-residue chain is Peptide chain release factor 1 (355 aa).

N5-methylglutamine is present on Gln-233.

The protein belongs to the prokaryotic/mitochondrial release factor family. In terms of processing, methylated by PrmC. Methylation increases the termination efficiency of RF1.

It is found in the cytoplasm. Functionally, peptide chain release factor 1 directs the termination of translation in response to the peptide chain termination codons UAG and UAA. This is Peptide chain release factor 1 from Bacillus cereus (strain ATCC 14579 / DSM 31 / CCUG 7414 / JCM 2152 / NBRC 15305 / NCIMB 9373 / NCTC 2599 / NRRL B-3711).